Reading from the N-terminus, the 212-residue chain is Protein-L-isoaspartate O-methyltransferase (212 aa).

Residue S60 is part of the active site.

This sequence belongs to the methyltransferase superfamily. L-isoaspartyl/D-aspartyl protein methyltransferase family.

It is found in the cytoplasm. It carries out the reaction [protein]-L-isoaspartate + S-adenosyl-L-methionine = [protein]-L-isoaspartate alpha-methyl ester + S-adenosyl-L-homocysteine. Its function is as follows. Catalyzes the methyl esterification of L-isoaspartyl residues in peptides and proteins that result from spontaneous decomposition of normal L-aspartyl and L-asparaginyl residues. It plays a role in the repair and/or degradation of damaged proteins. The sequence is that of Protein-L-isoaspartate O-methyltransferase from Methanococcus maripaludis (strain C7 / ATCC BAA-1331).